The chain runs to 177 residues: Large ribosomal subunit protein uL6 (177 aa).

This sequence belongs to the universal ribosomal protein uL6 family. Part of the 50S ribosomal subunit.

This protein binds to the 23S rRNA, and is important in its secondary structure. It is located near the subunit interface in the base of the L7/L12 stalk, and near the tRNA binding site of the peptidyltransferase center. This is Large ribosomal subunit protein uL6 from Natronomonas pharaonis (strain ATCC 35678 / DSM 2160 / CIP 103997 / JCM 8858 / NBRC 14720 / NCIMB 2260 / Gabara) (Halobacterium pharaonis).